Reading from the N-terminus, the 133-residue chain is Ribosome-binding factor A (133 aa).

The protein belongs to the RbfA family. As to quaternary structure, monomer. Binds 30S ribosomal subunits, but not 50S ribosomal subunits or 70S ribosomes.

The protein resides in the cytoplasm. Its function is as follows. One of several proteins that assist in the late maturation steps of the functional core of the 30S ribosomal subunit. Associates with free 30S ribosomal subunits (but not with 30S subunits that are part of 70S ribosomes or polysomes). Required for efficient processing of 16S rRNA. May interact with the 5'-terminal helix region of 16S rRNA. The polypeptide is Ribosome-binding factor A (Bordetella parapertussis (strain 12822 / ATCC BAA-587 / NCTC 13253)).